The following is a 353-amino-acid chain: UDP-3-O-acylglucosamine N-acyltransferase (353 aa).

The active-site Proton acceptor is histidine 242.

This sequence belongs to the transferase hexapeptide repeat family. LpxD subfamily. Homotrimer.

It carries out the reaction a UDP-3-O-[(3R)-3-hydroxyacyl]-alpha-D-glucosamine + a (3R)-hydroxyacyl-[ACP] = a UDP-2-N,3-O-bis[(3R)-3-hydroxyacyl]-alpha-D-glucosamine + holo-[ACP] + H(+). It functions in the pathway bacterial outer membrane biogenesis; LPS lipid A biosynthesis. Its function is as follows. Catalyzes the N-acylation of UDP-3-O-acylglucosamine using 3-hydroxyacyl-ACP as the acyl donor. Is involved in the biosynthesis of lipid A, a phosphorylated glycolipid that anchors the lipopolysaccharide to the outer membrane of the cell. The sequence is that of UDP-3-O-acylglucosamine N-acyltransferase from Pseudomonas aeruginosa (strain LESB58).